Here is a 208-residue protein sequence, read N- to C-terminus: dITP/XTP pyrophosphatase (208 aa).

Substrate is bound at residue 11 to 16; it reads TGNAKK. Catalysis depends on D73, which acts as the Proton acceptor. D73 contributes to the Mg(2+) binding site. Substrate is bound by residues S74, 157-160, K180, and 185-186; these read FGYD and HR.

Belongs to the HAM1 NTPase family. As to quaternary structure, homodimer. Mg(2+) serves as cofactor.

It carries out the reaction XTP + H2O = XMP + diphosphate + H(+). It catalyses the reaction dITP + H2O = dIMP + diphosphate + H(+). The catalysed reaction is ITP + H2O = IMP + diphosphate + H(+). Its function is as follows. Pyrophosphatase that catalyzes the hydrolysis of nucleoside triphosphates to their monophosphate derivatives, with a high preference for the non-canonical purine nucleotides XTP (xanthosine triphosphate), dITP (deoxyinosine triphosphate) and ITP. Seems to function as a house-cleaning enzyme that removes non-canonical purine nucleotides from the nucleotide pool, thus preventing their incorporation into DNA/RNA and avoiding chromosomal lesions. This Rhodopirellula baltica (strain DSM 10527 / NCIMB 13988 / SH1) protein is dITP/XTP pyrophosphatase.